Consider the following 156-residue polypeptide: MPRRKVVAKREILPDPKFGSERLAKFMNHLMVSGKKSVAERIVYGALDKVAERSKDEPLEIFDKALETIQPMVEVKSRRVGGATYQVPVEVRPSRRQALAMRWLVDAARSRGEKTMVQRLAGEMLDAAEGKGAAVKKREDVHRMADANKAFSHYRF.

It belongs to the universal ribosomal protein uS7 family. As to quaternary structure, part of the 30S ribosomal subunit. Contacts proteins S9 and S11.

In terms of biological role, one of the primary rRNA binding proteins, it binds directly to 16S rRNA where it nucleates assembly of the head domain of the 30S subunit. Is located at the subunit interface close to the decoding center, probably blocks exit of the E-site tRNA. This chain is Small ribosomal subunit protein uS7, found in Chromohalobacter salexigens (strain ATCC BAA-138 / DSM 3043 / CIP 106854 / NCIMB 13768 / 1H11).